The following is a 402-amino-acid chain: Advanced glycosylation end product-specific receptor (402 aa).

An N-terminal signal peptide occupies residues 1 to 22 (MPAGTAARAWVLVLALWGAVAG). Residues 23–109 (GQNITARIGE…ATNRRGKEVK (87 aa)) form the Ig-like V-type domain. Topologically, residues 23–340 (GQNITARIGE…VGESGLGTLA (318 aa)) are extracellular. 2 N-linked (GlcNAc...) asparagine glycosylation sites follow: Asn25 and Asn80. Cystine bridges form between Cys38–Cys98 and Cys143–Cys206. Ig-like C2-type domains lie at 123 to 219 (PEIV…RPLN) and 233 to 315 (PEGI…PPVS). The segment at 295-332 (GTYSCVATHPSHGPQESPPVSIRVTETGDEGPAEGSVG) is disordered. A helical transmembrane segment spans residues 341 to 361 (LALGILGGLGVVALLVGAILW). Residues 362–402 (RKRQPRREERKAPESQEDEEERAELNQSEEAEMPENGAGGP) lie on the Cytoplasmic side of the membrane. The tract at residues 365-402 (QPRREERKAPESQEDEEERAELNQSEEAEMPENGAGGP) is disordered. Residues Ser376 and Ser389 each carry the phosphoserine; by ATM modification. Residues 376–394 (SQEDEEERAELNQSEEAEM) show a composition bias toward acidic residues.

In terms of assembly, constitutive homodimer; disulfide-linked. Forms homooligomers. Interacts with S100A1 and APP. Interacts with S100B, S100A12 and S100A14. Interacts with TIRAP. Interacts with HMGB1. Interacts with LGP2; this interaction plays an important role in AGER-mediated pro-inflammatory responses and cytokine release. Interacts with double-strand break repair protein MRE11 which is a core component of the MRN complex; the interaction enhances MRE11 endonuclease activity and promotes DNA repair. Interacts with the MCM2-7 complex via interaction with complex member MCM2; the interaction is increased following DNA replication stress and stabilizes the MCM2-7 complex at replication forks. In terms of processing, phosphorylated on its cytoplasmic domain by PKCzeta/PRKCZ upon ligand binding. Phosphorylated by ATM following DNA damage. Post-translationally, targeted by the ubiquitin E3 ligase subunit FBXO10 to mediate its ubiquitination and degradation. Isoform 1: Expressed at higher levels in the coronary arterioles in type 2 diabetic mice (at protein level). Endothelial cells. Expressed in lung, kidney, brain and heart. Most prevalent isoform with the highest level in heart. Isoform 2: Expressed in brain, lung, kidney and small intestine with the highest level in lung. Expressed in brain, lung, kidney and small intestine with the highest level in small intestine (at protein level). Detected in neurons of the cerebrum, bronchial epithelium, endothelial cells, tubular cells of kidney and epithelial cells of small intestine (at protein level). Expression is increased in the kidney of diabetic wild-type mice (at protein level), but not in the other tissues. Expressed only in kidney. Expression is increased in the kidney of diabetic mice. Isoform 3: Expressed in lung, kidney and heart. The second most prevalent isoform with the highest level in lung. Not expressed in brain. Isoform 4: Expressed at very low level in lung only. Isoform 5: Expressed at very low level in lung only. Isoform 6: Expressed at very low level in lung only. Isoform 7: Expressed at very low level in heart only. Isoform 8: Expressed at very low level in lung only. Isoform 9: Expressed at very low level in heart only. Isoform 10: Expressed in lung, brain, heart and kidney with a very high level in kidney. Isoform 11: Expressed in brain, kidney and heart. Not expressed in lung. Isoform 12: Expressed at very low level in lung and kidney. Isoform 13: Expressed at very low level in lung only.

It localises to the cell membrane. The protein resides in the cell projection. The protein localises to the phagocytic cup. It is found in the early endosome. Its subcellular location is the nucleus. It localises to the secreted. In terms of biological role, cell surface pattern recognition receptor that senses endogenous stress signals with a broad ligand repertoire including advanced glycation end products, S100 proteins, high-mobility group box 1 protein/HMGB1, amyloid beta/APP oligomers, nucleic acids, histones, phospholipids and glycosaminoglycans. Advanced glycosylation end products are nonenzymatically glycosylated proteins which accumulate in vascular tissue in aging and at an accelerated rate in diabetes. These ligands accumulate at inflammatory sites during the pathogenesis of various diseases including diabetes, vascular complications, neurodegenerative disorders and cancers, and RAGE transduces their binding into pro-inflammatory responses. Upon ligand binding, uses TIRAP and MYD88 as adapters to transduce the signal ultimately leading to the induction of inflammatory cytokines IL6, IL8 and TNFalpha through activation of NF-kappa-B. Interaction with S100A12 on endothelium, mononuclear phagocytes, and lymphocytes triggers cellular activation, with generation of key pro-inflammatory mediators. Interaction with S100B after myocardial infarction may play a role in myocyte apoptosis by activating ERK1/2 and p53/TP53 signaling. Contributes to the translocation of amyloid-beta peptide (ABPP) across the cell membrane from the extracellular to the intracellular space in cortical neurons. ABPP-initiated RAGE signaling, especially stimulation of p38 mitogen-activated protein kinase (MAPK), has the capacity to drive a transport system delivering ABPP as a complex with RAGE to the intraneuronal space. Participates in endothelial albumin transcytosis together with HMGB1 through the RAGE/SRC/Caveolin-1 pathway, leading to endothelial hyperpermeability. Mediates the loading of HMGB1 in extracellular vesicles (EVs) that shuttle HMGB1 to hepatocytes by transferrin-mediated endocytosis and subsequently promote hepatocyte pyroptosis by activating the NLRP3 inflammasome. Binds to DNA and promotes extracellular hypomethylated DNA (CpG DNA) uptake by cells via the endosomal route to activate inflammatory responses. Mediates phagocytosis by non-professional phagocytes (NPP) and this is enhanced by binding to ligands including RNA, DNA, HMGB1 and histones. Promotes NPP-mediated phagocytosis of Saccharomyces cerevisiae spores by binding to RNA attached to the spore wall. Also promotes NPP-mediated phagocytosis of apoptotic cells. Following DNA damage, recruited to DNA double-strand break sites where it colocalizes with the MRN repair complex via interaction with double-strand break repair protein MRE11. Enhances the endonuclease activity of MRE11, promoting the end resection of damaged DNA. Promotes DNA damage repair in trophoblasts which enhances trophoblast invasion and contributes to placental development and maintenance. Protects cells from DNA replication stress by localizing to damaged replication forks where it stabilizes the MCM2-7 complex and promotes faithful progression of the replication fork. Functionally, is able to advanced glycosylation end product (AGE)-induce nuclear factor NF-kappa-B activation. Its function is as follows. Down-regulates receptor for advanced glycosylation end products (RAGE)-ligand induced signaling through various MAPK pathways including ERK1/2, p38 and SAPK/JNK. Significantly affects tumor cell properties through decreasing cell migration, invasion, adhesion and proliferation, and increasing cellular apoptosis. Exhibits drastic inhibition on tumorigenesis in vitro. The sequence is that of Advanced glycosylation end product-specific receptor (Ager) from Mus musculus (Mouse).